Consider the following 105-residue polypeptide: uncharacterized protein (105 aa).

Positions 2–42 (QVLIGTKLVTEGIDIKQLMMVIMLDNRLNIIELIQGVGRLR) constitute a Helicase C-terminal domain.

Belongs to the helicase family. Yeast subtelomeric Y' repeat subfamily.

This is an uncharacterized protein from Saccharomyces cerevisiae (strain ATCC 204508 / S288c) (Baker's yeast).